A 155-amino-acid chain; its full sequence is Gas vesicle protein K (155 aa).

This sequence belongs to the gas vesicle GvpK family.

It is found in the gas vesicle. Its function is as follows. Might be involved in nucleating gas vesicle formation. Gas vesicles (GV) are hollow, gas filled proteinaceous nanostructures. During planktonic growth they allow positioning of the organism at a favorable depth for light or nutrient acquisition. Cluster expression in E.coli (gvpA1-gvpA2-gvpC-gvpN-gvpJ-gvpK-gvpF-gvpG-gvpV-gvpW) allows cells to float and produces irregularly shaped gas vesicles. The protein is Gas vesicle protein K of Nostoc sp. (strain PCC 7120 / SAG 25.82 / UTEX 2576).